A 535-amino-acid chain; its full sequence is Thermosome subunit gamma (535 aa).

It belongs to the TCP-1 chaperonin family. As to quaternary structure, forms a heterooligomeric complex of two stacked nine-membered rings; one of alpha and the other of beta subunits.

The protein resides in the cytoplasm. It carries out the reaction ATP + H2O = ADP + phosphate + H(+). Its function is as follows. Molecular chaperone; binds unfolded polypeptides in vitro, and has a weak ATPase activity. The polypeptide is Thermosome subunit gamma (thsC) (Saccharolobus shibatae (strain ATCC 51178 / DSM 5389 / JCM 8931 / NBRC 15437 / B12) (Sulfolobus shibatae)).